Reading from the N-terminus, the 488-residue chain is Acetyl-CoA decarbonylase/synthase complex subunit gamma (488 aa).

Residues 1-61 (MPKKISAMDI…FEKNKKKIIE (61 aa)) form the 4Fe-4S domain. The [4Fe-4S] cluster site is built by cysteine 19, cysteine 22, cysteine 27, and cysteine 44.

In terms of assembly, heterodimer of delta and gamma chains. The ACDS complex is made up of alpha, epsilon, beta, gamma and delta chains with a probable stoichiometry of (alpha(2)epsilon(2))(4)-beta(8)-(gamma(1)delta(1))(8). The cofactor is corrinoid. Requires [4Fe-4S] cluster as cofactor.

The enzyme catalyses 5,6,7,8-tetrahydrosarcinapterin + methyl-Co(III)-[corrinoid Fe-S protein] = 5-methyltetrahydrosarcinapterin + Co(I)-[corrinoid Fe-S protein] + H(+). Its function is as follows. Part of a complex that catalyzes the reversible cleavage of acetyl-CoA, allowing autotrophic growth from CO(2). The sequence is that of Acetyl-CoA decarbonylase/synthase complex subunit gamma from Methanocaldococcus jannaschii (strain ATCC 43067 / DSM 2661 / JAL-1 / JCM 10045 / NBRC 100440) (Methanococcus jannaschii).